Reading from the N-terminus, the 222-residue chain is Triosephosphate isomerase (222 aa).

Residue Asn9 to Lys11 participates in substrate binding. His93 (electrophile) is an active-site residue. The active-site Proton acceptor is the Glu141. Substrate contacts are provided by residues Ile146, Gly181, and Ala202–Ser203.

It belongs to the triosephosphate isomerase family. Homotetramer; dimer of dimers.

Its subcellular location is the cytoplasm. It carries out the reaction D-glyceraldehyde 3-phosphate = dihydroxyacetone phosphate. It functions in the pathway carbohydrate biosynthesis; gluconeogenesis. The protein operates within carbohydrate degradation; glycolysis; D-glyceraldehyde 3-phosphate from glycerone phosphate: step 1/1. In terms of biological role, involved in the gluconeogenesis. Catalyzes stereospecifically the conversion of dihydroxyacetone phosphate (DHAP) to D-glyceraldehyde-3-phosphate (G3P). The sequence is that of Triosephosphate isomerase from Methanosarcina acetivorans (strain ATCC 35395 / DSM 2834 / JCM 12185 / C2A).